The following is a 160-amino-acid chain: Non-secretory ribonuclease (160 aa).

Positions 1 to 27 are cleaved as a signal peptide; the sequence is MVPKLFTSPICLLLLLGLMGVEGSLHA. W34 carries a C-linked (Man) tryptophan glycan. H42 acts as the Proton acceptor in catalysis. An N-linked (GlcNAc...) asparagine glycan is attached at N44. Intrachain disulfides connect C50-C110, C64-C122, C82-C137, and C89-C98. The residue at position 60 (Y60) is a 3'-nitrotyrosine. A substrate-binding site is contributed by 65 to 69; sequence KNQNT. 3 N-linked (GlcNAc...) asparagine glycosylation sites follow: N92, N111, and N138. The active-site Proton donor is H155.

It belongs to the pancreatic ribonuclease family. Interacts with and forms a tight 1:1 complex with RNH1. Dimerization of two such complexes may occur.

It localises to the lysosome. It is found in the cytoplasmic granule. The catalysed reaction is an [RNA] containing cytidine + H2O = an [RNA]-3'-cytidine-3'-phosphate + a 5'-hydroxy-ribonucleotide-3'-[RNA].. It carries out the reaction an [RNA] containing uridine + H2O = an [RNA]-3'-uridine-3'-phosphate + a 5'-hydroxy-ribonucleotide-3'-[RNA].. This is a non-secretory ribonuclease. It is a pyrimidine specific nuclease with a slight preference for U. Cytotoxin and helminthotoxin. Possesses a wide variety of biological activities. The sequence is that of Non-secretory ribonuclease (RNASE2) from Macaca nemestrina (Pig-tailed macaque).